Here is a 345-residue protein sequence, read N- to C-terminus: uncharacterized protein (345 aa).

Its subcellular location is the plastid. It is found in the chloroplast. This is an uncharacterized protein from Chlamydomonas moewusii (Chlamydomonas eugametos).